Consider the following 221-residue polypeptide: Large ribosomal subunit protein uL3 (221 aa).

The segment at 131-165 (HNQSRGPETHGSRHHRRPGSMGPIKGKIKGKKLPG) is disordered.

This sequence belongs to the universal ribosomal protein uL3 family. As to quaternary structure, part of the 50S ribosomal subunit. Forms a cluster with proteins L14 and L19.

In terms of biological role, one of the primary rRNA binding proteins, it binds directly near the 3'-end of the 23S rRNA, where it nucleates assembly of the 50S subunit. The polypeptide is Large ribosomal subunit protein uL3 (Phytoplasma australiense).